Consider the following 699-residue polypeptide: Protein Scribble homolog let-413 (699 aa).

LRR repeat units follow at residues 37 to 59 (KLED…FSLR), 60 to 81 (HLRI…IGNL), 83 to 104 (QLIE…MQNC), 106 to 127 (LLTT…ICEC), 129 to 150 (SITI…IGSL), 152 to 174 (NLRV…VELR), 175 to 196 (KLEE…IGKL), 198 to 219 (SLRE…ISGC), 221 to 242 (MLDQ…LGRM), 244 to 265 (NLTD…FGEL), 267 to 288 (RLQM…IGKC), 290 to 311 (SLTE…IGDL), 313 to 334 (QLTT…IGNC), 336 to 357 (SLTV…IGKC), 359 to 380 (NLTV…VKVL), and 382 to 403 (KLQA…SETR). Residues 584–665 (AGGTSNDPAP…RSPSPVSRTS (82 aa)) enclose the PDZ domain. The tract at residues 656–699 (RSPSPVSRTSEPSLNGSSHQLNHFDAGSPDSTMFVTSSTPVYAS) is disordered. Polar residues-rich tracts occupy residues 659–676 (SPVS…SHQL) and 684–699 (PDST…VYAS).

The protein belongs to the LAP (LRR and PDZ) protein family. In terms of tissue distribution, expressed in the terminal web of the intestine. Expressed in seam cells. Expressed in the basolateral surfaces of epithelia and the nervous system. Expressed in the intestine, epidermis, excretory canal, reproductive system including vulva, uterus and spermatheca, in both larval and adult stage animals.

The protein resides in the basolateral cell membrane. Critical role in assembling adherens junctions; adapter protein involved in polarizing protein trafficking in epithelial cells. Necessary to maintain, not establish, the entire terminal web (organelle-depleted, intermediate filament-rich layer of cytoplasm that underlies the apical microvilli of polarized epithelial cells) or brush border assembly at the apical surface gut cells. Required for correct localization of ifb-2 intermediate filaments in the terminal web. Required for dlg-1 and hmr-1 lateral localization. Maintains cell polarity by correctly positioning adherens junction protein components including ajm-1 and hmp-1 at discrete subapical positions. Plays a role in the correct localization of the dlg-1-ajm-1 complex, polarity protein par-3, and actin microfilament to the apical junction of spermatheca cells, and is required for ovulation. Regulates the establishment of newly-formed epithelia in conjunction with dlg-1. Required in the epidermis during larval development. Plays a role in cellular junction integrity and in the directed outgrowth of seam cells, towards neighboring seam cells, during larval development; probably acts by promoting the assembly and stability of dlg-1 at apical junctions. The protein is Protein Scribble homolog let-413 of Caenorhabditis elegans.